Reading from the N-terminus, the 188-residue chain is Acireductone dioxygenase (188 aa).

Residues His97, His99, Glu103, and His141 each coordinate Fe(2+). His97, His99, Glu103, and His141 together coordinate Ni(2+).

This sequence belongs to the acireductone dioxygenase (ARD) family. As to quaternary structure, monomer. Requires Fe(2+) as cofactor. Ni(2+) serves as cofactor.

It carries out the reaction 1,2-dihydroxy-5-(methylsulfanyl)pent-1-en-3-one + O2 = 3-(methylsulfanyl)propanoate + CO + formate + 2 H(+). The enzyme catalyses 1,2-dihydroxy-5-(methylsulfanyl)pent-1-en-3-one + O2 = 4-methylsulfanyl-2-oxobutanoate + formate + 2 H(+). It functions in the pathway amino-acid biosynthesis; L-methionine biosynthesis via salvage pathway; L-methionine from S-methyl-5-thio-alpha-D-ribose 1-phosphate: step 5/6. Catalyzes 2 different reactions between oxygen and the acireductone 1,2-dihydroxy-3-keto-5-methylthiopentene (DHK-MTPene) depending upon the metal bound in the active site. Fe-containing acireductone dioxygenase (Fe-ARD) produces formate and 2-keto-4-methylthiobutyrate (KMTB), the alpha-ketoacid precursor of methionine in the methionine recycle pathway. Ni-containing acireductone dioxygenase (Ni-ARD) produces methylthiopropionate, carbon monoxide and formate, and does not lie on the methionine recycle pathway. In Xanthomonas axonopodis pv. citri (strain 306), this protein is Acireductone dioxygenase.